A 309-amino-acid polypeptide reads, in one-letter code: ATP synthase gamma chain (309 aa).

This sequence belongs to the ATPase gamma chain family. F-type ATPases have 2 components, CF(1) - the catalytic core - and CF(0) - the membrane proton channel. CF(1) has five subunits: alpha(3), beta(3), gamma(1), delta(1), epsilon(1). CF(0) has three main subunits: a, b and c.

It is found in the cell membrane. Produces ATP from ADP in the presence of a proton gradient across the membrane. The gamma chain is believed to be important in regulating ATPase activity and the flow of protons through the CF(0) complex. This chain is ATP synthase gamma chain, found in Mycobacterium sp. (strain JLS).